The chain runs to 324 residues: Large ribosomal subunit protein uL3m (324 aa).

Residues 1–41 (MAAVPRGLLSRINQFLSIRSITPSSSESLPHCSSFFLIRRF) constitute a mitochondrion transit peptide. The interval 206–229 (PASHGASLSHRSGGSTGQRDAPGK) is disordered.

Belongs to the universal ribosomal protein uL3 family. Part of the 50S ribosomal subunit.

The protein localises to the mitochondrion. In terms of biological role, one of the primary rRNA binding proteins, it binds directly near the 3'-end of the 23S rRNA, where it nucleates assembly of the 50S subunit. This is Large ribosomal subunit protein uL3m from Arabidopsis thaliana (Mouse-ear cress).